Here is a 270-residue protein sequence, read N- to C-terminus: Formamidopyrimidine-DNA glycosylase (270 aa).

Pro2 serves as the catalytic Schiff-base intermediate with DNA. The active-site Proton donor is Glu3. Lys58 acts as the Proton donor; for beta-elimination activity in catalysis. His91, Arg110, and Arg151 together coordinate DNA. An FPG-type zinc finger spans residues Phe236–Arg270. Arg260 (proton donor; for delta-elimination activity) is an active-site residue.

This sequence belongs to the FPG family. In terms of assembly, monomer. Zn(2+) serves as cofactor.

It catalyses the reaction Hydrolysis of DNA containing ring-opened 7-methylguanine residues, releasing 2,6-diamino-4-hydroxy-5-(N-methyl)formamidopyrimidine.. The enzyme catalyses 2'-deoxyribonucleotide-(2'-deoxyribose 5'-phosphate)-2'-deoxyribonucleotide-DNA = a 3'-end 2'-deoxyribonucleotide-(2,3-dehydro-2,3-deoxyribose 5'-phosphate)-DNA + a 5'-end 5'-phospho-2'-deoxyribonucleoside-DNA + H(+). Functionally, involved in base excision repair of DNA damaged by oxidation or by mutagenic agents. Acts as a DNA glycosylase that recognizes and removes damaged bases. Has a preference for oxidized purines, such as 7,8-dihydro-8-oxoguanine (8-oxoG). Has AP (apurinic/apyrimidinic) lyase activity and introduces nicks in the DNA strand. Cleaves the DNA backbone by beta-delta elimination to generate a single-strand break at the site of the removed base with both 3'- and 5'-phosphates. The protein is Formamidopyrimidine-DNA glycosylase of Pseudomonas putida (strain W619).